Here is a 109-residue protein sequence, read N- to C-terminus: Urease subunit gamma (109 aa).

Belongs to the urease gamma subunit family. Heterotrimer of UreA (gamma), UreB (beta) and UreC (alpha) subunits. Three heterotrimers associate to form the active enzyme.

It localises to the cytoplasm. The catalysed reaction is urea + 2 H2O + H(+) = hydrogencarbonate + 2 NH4(+). It functions in the pathway nitrogen metabolism; urea degradation; CO(2) and NH(3) from urea (urease route): step 1/1. The polypeptide is Urease subunit gamma (Natronomonas pharaonis (strain ATCC 35678 / DSM 2160 / CIP 103997 / JCM 8858 / NBRC 14720 / NCIMB 2260 / Gabara) (Halobacterium pharaonis)).